Here is a 295-residue protein sequence, read N- to C-terminus: Bifunctional protein FolD (295 aa).

NADP(+) is bound by residues 166 to 168 (GRS), Ser-191, and Ile-232.

It belongs to the tetrahydrofolate dehydrogenase/cyclohydrolase family. In terms of assembly, homodimer.

The enzyme catalyses (6R)-5,10-methylene-5,6,7,8-tetrahydrofolate + NADP(+) = (6R)-5,10-methenyltetrahydrofolate + NADPH. The catalysed reaction is (6R)-5,10-methenyltetrahydrofolate + H2O = (6R)-10-formyltetrahydrofolate + H(+). Its pathway is one-carbon metabolism; tetrahydrofolate interconversion. Functionally, catalyzes the oxidation of 5,10-methylenetetrahydrofolate to 5,10-methenyltetrahydrofolate and then the hydrolysis of 5,10-methenyltetrahydrofolate to 10-formyltetrahydrofolate. The polypeptide is Bifunctional protein FolD (Rhodopseudomonas palustris (strain ATCC BAA-98 / CGA009)).